The primary structure comprises 525 residues: Peptide chain release factor 3 (525 aa).

The tr-type G domain occupies 9–276 (AKRRTFAIIS…GFTRYAPAPQ (268 aa)). Residues 18-25 (SHPDAGKT), 86-90 (DTPGH), and 140-143 (NKFD) contribute to the GTP site.

This sequence belongs to the TRAFAC class translation factor GTPase superfamily. Classic translation factor GTPase family. PrfC subfamily.

The protein localises to the cytoplasm. Functionally, increases the formation of ribosomal termination complexes and stimulates activities of RF-1 and RF-2. It binds guanine nucleotides and has strong preference for UGA stop codons. It may interact directly with the ribosome. The stimulation of RF-1 and RF-2 is significantly reduced by GTP and GDP, but not by GMP. The chain is Peptide chain release factor 3 from Francisella tularensis subsp. holarctica (strain FTNF002-00 / FTA).